The following is a 31-amino-acid chain: Cytochrome b6-f complex subunit 6 (31 aa).

The chain crosses the membrane as a helical span at residues 3–23 (TIISYFGFLLASIIFTLILFI).

It belongs to the PetL family. As to quaternary structure, the 4 large subunits of the cytochrome b6-f complex are cytochrome b6, subunit IV (17 kDa polypeptide, PetD), cytochrome f and the Rieske protein, while the 4 small subunits are PetG, PetL, PetM and PetN. The complex functions as a dimer.

Its subcellular location is the plastid. The protein resides in the chloroplast thylakoid membrane. Its function is as follows. Component of the cytochrome b6-f complex, which mediates electron transfer between photosystem II (PSII) and photosystem I (PSI), cyclic electron flow around PSI, and state transitions. PetL is important for photoautotrophic growth as well as for electron transfer efficiency and stability of the cytochrome b6-f complex. The protein is Cytochrome b6-f complex subunit 6 of Abies homolepis (Nikko fir).